The following is an 89-amino-acid chain: Large ribosomal subunit protein bL27 (89 aa).

The protein belongs to the bacterial ribosomal protein bL27 family.

The sequence is that of Large ribosomal subunit protein bL27 from Bacteroides thetaiotaomicron (strain ATCC 29148 / DSM 2079 / JCM 5827 / CCUG 10774 / NCTC 10582 / VPI-5482 / E50).